A 149-amino-acid polypeptide reads, in one-letter code: Putative prefoldin subunit alpha (149 aa).

The protein belongs to the prefoldin subunit alpha family.

It localises to the cytoplasm. In terms of biological role, molecular chaperone capable of stabilizing a range of proteins. This Aquifex aeolicus (strain VF5) protein is Putative prefoldin subunit alpha.